The following is a 906-amino-acid chain: Cadherin-2 (906 aa).

The signal sequence occupies residues methionine 1–alanine 25. Residues serine 26–arginine 159 constitute a propeptide that is removed on maturation. Residue serine 96 is modified to Phosphoserine. Cadherin domains follow at residues aspartate 160 to phenylalanine 267, leucine 268 to phenylalanine 382, threonine 383 to phenylalanine 497, alanine 498 to proline 603, and glutamine 604 to glycine 717. The Extracellular portion of the chain corresponds to aspartate 160–threonine 724. Ca(2+) is bound at residue glutamate 170. A glycan (N-linked (GlcNAc...) asparagine) is linked at asparagine 190. Positions 226, 228, 259, 260, 261, 262, and 263 each coordinate Ca(2+). A glycan (N-linked (GlcNAc...) asparagine) is linked at asparagine 273. 3 residues coordinate Ca(2+): aspartate 293, aspartate 295, and asparagine 301. Asparagine 325 carries an N-linked (GlcNAc...) asparagine glycan. Residue aspartate 353 coordinates Ca(2+). N-linked (GlcNAc...) asparagine glycosylation is found at asparagine 402, asparagine 572, asparagine 622, asparagine 651, and asparagine 692. Residues isoleucine 725–tryptophan 745 form a helical membrane-spanning segment. At methionine 746–aspartate 906 the chain is on the cytoplasmic side. The span at serine 863–glycine 880 shows a compositional bias: low complexity. The tract at residues serine 863–aspartate 883 is disordered.

In terms of assembly, homodimer (via extracellular region). Can also form heterodimers with other cadherins (via extracellular region). Dimerization occurs in trans, i.e. with a cadherin chain from another cell. Interacts with PCDH8; this complex may also include TAOK2. The interaction with PCDH8 may lead to internalization through TAOK2/p38 MAPK pathway. Identified in a complex containing FGFR4, NCAM1, CDH2, PLCG1, FRS2, SRC, SHC1, GAP43 and CTTN. May interact with OBSCN (via protein kinase domain 2). Interacts with FBXO45. Cleaved by MMP24. Ectodomain cleavage leads to the generation of a soluble 90 kDa N-terminal soluble fragment and a 45 kDa membrane-bound C-terminal fragment 1 (CTF1), which is further cleaved by gamma-secretase into a 35 kDa. Cleavage in neural stem cells by MMP24 affects CDH2-mediated anchorage of neural stem cells to ependymocytes in the adult subependymal zone, leading to modulate neural stem cell quiescence. In terms of processing, may be phosphorylated by OBSCN. In terms of tissue distribution, in testis, expressed in Sertoli and germ cells.

It is found in the cell membrane. The protein localises to the sarcolemma. The protein resides in the cell junction. It localises to the cell surface. Its subcellular location is the desmosome. It is found in the adherens junction. Its function is as follows. Calcium-dependent cell adhesion protein; preferentially mediates homotypic cell-cell adhesion by dimerization with a CDH2 chain from another cell. Cadherins may thus contribute to the sorting of heterogeneous cell types. Acts as a regulator of neural stem cells quiescence by mediating anchorage of neural stem cells to ependymocytes in the adult subependymal zone: upon cleavage by MMP24, CDH2-mediated anchorage is affected, leading to modulate neural stem cell quiescence. Plays a role in cell-to-cell junction formation between pancreatic beta cells and neural crest stem (NCS) cells, promoting the formation of processes by NCS cells. Required for proper neurite branching. Required for pre- and postsynaptic organization. CDH2 may be involved in neuronal recognition mechanism. In hippocampal neurons, may regulate dendritic spine density. The protein is Cadherin-2 (Cdh2) of Rattus norvegicus (Rat).